The sequence spans 585 residues: Chaperonin CPN60-like 1, mitochondrial (585 aa).

The transit peptide at 1-32 (MYRLVSNVASKARIARKCTSQIGSRLNSTRNY) directs the protein to the mitochondrion.

The protein belongs to the chaperonin (HSP60) family.

The protein localises to the mitochondrion. Functionally, implicated in mitochondrial protein import and macromolecular assembly. May facilitate the correct folding of imported proteins. May also prevent misfolding and promote the refolding and proper assembly of unfolded polypeptides generated under stress conditions in the mitochondrial matrix. The chain is Chaperonin CPN60-like 1, mitochondrial from Arabidopsis thaliana (Mouse-ear cress).